The chain runs to 404 residues: Histidine--tRNA ligase (404 aa).

The protein belongs to the class-II aminoacyl-tRNA synthetase family.

It is found in the cytoplasm. The catalysed reaction is tRNA(His) + L-histidine + ATP = L-histidyl-tRNA(His) + AMP + diphosphate + H(+). The chain is Histidine--tRNA ligase from Nanoarchaeum equitans (strain Kin4-M).